We begin with the raw amino-acid sequence, 422 residues long: GTPase Obg (422 aa).

Residues 2–157 (AKFIDEIKLT…YLAHIVLKVM (156 aa)) form the Obg domain. Positions 158–325 (SDVGIIGKPS…LKGKIWKILE (168 aa)) constitute an OBG-type G domain. GTP is bound by residues 164–171 (GKPSAGKS), 189–193 (FTTLV), 210–213 (DLPG), 279–282 (NKSD), and 306–308 (SAI). Mg(2+)-binding residues include serine 171 and threonine 191. The 87-residue stretch at 334–420 (EEEETEENVE…ILDYEFEWDG (87 aa)) folds into the OCT domain.

This sequence belongs to the TRAFAC class OBG-HflX-like GTPase superfamily. OBG GTPase family. In terms of assembly, monomer. The cofactor is Mg(2+).

The protein resides in the cytoplasm. An essential GTPase which binds GTP, GDP and possibly (p)ppGpp with moderate affinity, with high nucleotide exchange rates and a fairly low GTP hydrolysis rate. Plays a role in control of the cell cycle, stress response, ribosome biogenesis and in those bacteria that undergo differentiation, in morphogenesis control. The polypeptide is GTPase Obg (Mycoplasmopsis agalactiae (strain NCTC 10123 / CIP 59.7 / PG2) (Mycoplasma agalactiae)).